Consider the following 201-residue polypeptide: Small ribosomal subunit protein uS4 (201 aa).

Positions 91–151 (SRLDNVVYRA…EKSRSMLWFE (61 aa)) constitute an S4 RNA-binding domain.

This sequence belongs to the universal ribosomal protein uS4 family. In terms of assembly, part of the 30S ribosomal subunit. Contacts protein S5. The interaction surface between S4 and S5 is involved in control of translational fidelity.

Its function is as follows. One of the primary rRNA binding proteins, it binds directly to 16S rRNA where it nucleates assembly of the body of the 30S subunit. In terms of biological role, with S5 and S12 plays an important role in translational accuracy. This Corynebacterium jeikeium (strain K411) protein is Small ribosomal subunit protein uS4.